The sequence spans 194 residues: Protein cholesin (194 aa).

The interval 1-83 is disordered; that stretch reads MAKQKRKVPE…RKKEERQRLR (83 aa). Phosphoserine occurs at positions 23 and 59. Residues 61-83 show a composition bias toward basic and acidic residues; it reads EEQRVLERKLKKERKKEERQRLR. A phosphoserine mark is found at serine 97 and serine 175.

Secreted from the instestine, secretion is induced by feeding and cholesterol absorption.

It localises to the secreted. Functionally, hormone secreted from the intestine in response to cholesterol, where it acts to inhibit cholesterol synthesis in the liver and VLDL secretion,leading to a reduction in circulating cholesterol levels. Acts through binding to its receptor, GPR146. The chain is Protein cholesin from Homo sapiens (Human).